A 752-amino-acid polypeptide reads, in one-letter code: Photosystem I P700 chlorophyll a apoprotein A1 (752 aa).

8 helical membrane-spanning segments follow: residues 73–96 (IFSA…FHGA), 159–182 (LYVT…FHYH), 198–222 (LNHH…HVSA), 294–312 (IAHH…GHQY), 349–372 (WHAQ…HHMY), 388–414 (LCIF…IFMV), 436–458 (AIIS…LYIH), and 533–551 (FLIH…LILL). The [4Fe-4S] cluster site is built by Cys-575 and Cys-584. A run of 2 helical transmembrane segments spans residues 591–612 (HVFL…HFSW) and 666–688 (LSAY…MFLF). Position 677 (His-677) interacts with chlorophyll a'. Chlorophyll a-binding residues include Met-685 and Tyr-693. Trp-694 serves as a coordination point for phylloquinone. A helical transmembrane segment spans residues 726–746 (AVGVAHYLLGGIATTWAFFHA).

It belongs to the PsaA/PsaB family. In terms of assembly, the PsaA/B heterodimer binds the P700 chlorophyll special pair and subsequent electron acceptors. PSI consists of a core antenna complex that captures photons, and an electron transfer chain that converts photonic excitation into a charge separation. The cyanobacterial PSI reaction center is composed of one copy each of PsaA,B,C,D,E,F,I,J,K,L,M and X, and forms trimeric complexes. PSI electron transfer chain: 5 chlorophyll a, 1 chlorophyll a', 2 phylloquinones and 3 4Fe-4S clusters. PSI core antenna: 90 chlorophyll a, 22 carotenoids, 3 phospholipids and 1 galactolipid. P700 is a chlorophyll a/chlorophyll a' dimer, A0 is one or more chlorophyll a, A1 is one or both phylloquinones and FX is a shared 4Fe-4S iron-sulfur center. serves as cofactor.

The protein localises to the cellular thylakoid membrane. The enzyme catalyses reduced [plastocyanin] + hnu + oxidized [2Fe-2S]-[ferredoxin] = oxidized [plastocyanin] + reduced [2Fe-2S]-[ferredoxin]. In terms of biological role, psaA and PsaB bind P700, the primary electron donor of photosystem I (PSI), as well as the electron acceptors A0, A1 and FX. PSI is a plastocyanin/cytochrome c6-ferredoxin oxidoreductase, converting photonic excitation into a charge separation, which transfers an electron from the donor P700 chlorophyll pair to the spectroscopically characterized acceptors A0, A1, FX, FA and FB in turn. Oxidized P700 is reduced on the lumenal side of the thylakoid membrane by plastocyanin or cytochrome c6. The protein is Photosystem I P700 chlorophyll a apoprotein A1 of Nostoc punctiforme (strain ATCC 29133 / PCC 73102).